The following is a 36-amino-acid chain: Photosystem I reaction center subunit VIII (36 aa).

Residues 10–29 (FVPLVGLVFPAIAMASLFLY) form a helical membrane-spanning segment.

The protein belongs to the PsaI family.

The protein localises to the plastid. The protein resides in the chloroplast thylakoid membrane. Its function is as follows. May help in the organization of the PsaL subunit. The chain is Photosystem I reaction center subunit VIII from Oryza nivara (Indian wild rice).